The following is a 345-amino-acid chain: N-acetyl-gamma-glutamyl-phosphate reductase (345 aa).

The active site involves Cys-142.

Belongs to the NAGSA dehydrogenase family. Type 1 subfamily.

It localises to the cytoplasm. The enzyme catalyses N-acetyl-L-glutamate 5-semialdehyde + phosphate + NADP(+) = N-acetyl-L-glutamyl 5-phosphate + NADPH + H(+). It participates in amino-acid biosynthesis; L-arginine biosynthesis; N(2)-acetyl-L-ornithine from L-glutamate: step 3/4. Catalyzes the NADPH-dependent reduction of N-acetyl-5-glutamyl phosphate to yield N-acetyl-L-glutamate 5-semialdehyde. This is N-acetyl-gamma-glutamyl-phosphate reductase from Thermus thermophilus (strain ATCC BAA-163 / DSM 7039 / HB27).